A 309-amino-acid chain; its full sequence is Homoserine kinase (309 aa).

An ATP-binding site is contributed by 91-101 (PIGSGLGSSAC).

This sequence belongs to the GHMP kinase family. Homoserine kinase subfamily.

It localises to the cytoplasm. The enzyme catalyses L-homoserine + ATP = O-phospho-L-homoserine + ADP + H(+). Its pathway is amino-acid biosynthesis; L-threonine biosynthesis; L-threonine from L-aspartate: step 4/5. Its function is as follows. Catalyzes the ATP-dependent phosphorylation of L-homoserine to L-homoserine phosphate. In Salmonella dublin (strain CT_02021853), this protein is Homoserine kinase.